Consider the following 823-residue polypeptide: Apoptosis-resistant E3 ubiquitin protein ligase 1 (823 aa).

Residues 64–158 (WDWKDPYEVG…VAYSPYYKIF (95 aa)) form a Filamin repeat. A disordered region spans residues 315–345 (PPMHMSSSQRRPSTAIEEDDEDSPSECHTPE). The tract at residues 483–789 (SISDWSKNFE…THSTLPTAHT (307 aa)) is interaction with SOCS2. An HECT domain is found at 483–823 (SISDWSKNFE…SEGCEGFGML (341 aa)). The Glycyl thioester intermediate role is filled by C790.

In terms of assembly, interacts with SOCS2. Interacts (via HECT domain) with HTRA2, DIABLO/SMAC and SEPTIN4; in the cytoplasm following induction of apoptosis. In terms of processing, autoubiquitinated in vitro in the presence of E2 enzyme UBE2D1/UBCH5A. Detected in brain, testis, heart, liver, lung and kidney with very low levels in skeletal muscle and spleen.

The enzyme catalyses S-ubiquitinyl-[E2 ubiquitin-conjugating enzyme]-L-cysteine + [acceptor protein]-L-lysine = [E2 ubiquitin-conjugating enzyme]-L-cysteine + N(6)-ubiquitinyl-[acceptor protein]-L-lysine.. The protein operates within protein modification; protein ubiquitination. In terms of biological role, E3 ubiquitin-protein ligase that catalyzes 'Lys-11'- or 'Lys-33'-linked polyubiquitin chains, with some preference for 'Lys-33' linkages. E3 ubiquitin-protein ligases accept ubiquitin from an E2 ubiquitin-conjugating enzyme in the form of a thioester and then directly transfers the ubiquitin to targeted substrates. Ubiquitinates SEPTIN4, DIABLO/SMAC and HTRA2 in vitro. Modulates pulmonary inflammation by targeting SOCS2 for ubiquitination and subsequent degradation by the proteasome. This is Apoptosis-resistant E3 ubiquitin protein ligase 1 (Arel1) from Mus musculus (Mouse).